The sequence spans 657 residues: Acetyl-coenzyme A synthetase (657 aa).

CoA-binding positions include 192-195 and Thr311; that span reads RRGK. ATP-binding positions include 387-389, 411-416, Asp504, Arg519, and Arg530; these read GEP and DTWWQT. 2 residues coordinate Mg(2+): His543 and Val546. Arg592 contacts CoA. Lys617 carries the post-translational modification N6-acetyllysine.

The protein belongs to the ATP-dependent AMP-binding enzyme family. Requires Mg(2+) as cofactor. Acetylated. Deacetylation by the SIR2-homolog deacetylase activates the enzyme.

It catalyses the reaction acetate + ATP + CoA = acetyl-CoA + AMP + diphosphate. In terms of biological role, catalyzes the conversion of acetate into acetyl-CoA (AcCoA), an essential intermediate at the junction of anabolic and catabolic pathways. AcsA undergoes a two-step reaction. In the first half reaction, AcsA combines acetate with ATP to form acetyl-adenylate (AcAMP) intermediate. In the second half reaction, it can then transfer the acetyl group from AcAMP to the sulfhydryl group of CoA, forming the product AcCoA. The chain is Acetyl-coenzyme A synthetase from Campylobacter jejuni subsp. jejuni serotype O:6 (strain 81116 / NCTC 11828).